A 459-amino-acid chain; its full sequence is MAAPLEAQDQAPGEGEGLLIVKVEDSSWEQESAQHEDGRDSEACRQRFRQFCYGDVHGPHEAFSQLWELCCRWLRPELRTKEQILELLVLEQFLTVLPGEIQGWVREQHPGSGEEAVALVEDLQKQPVKAWRQDVPSEEAEPEAAGRGSQATGPPPTVGARRRPSVPQEQHSHSAQPPALLKEGRPGETTDTCFVSGVHGPVALGDIPFYFSREEWGTLDPAQRDLFWDIKRENSRNTTLGFGLKGQSEKSLLQEMVPVVPGQTGSDVTVSWSPEEAEAWESENRPRAALGPVVGARRGRPPTRRRQFRDLAAEKPHSCGQCGKRFRWGSDLARHQRTHTGEKPHKCPECDKSFRSSSDLVRHQGVHTGEKPFSCSECGKSFSRSAYLADHQRIHTGEKPFGCSDCGKSFSLRSYLLDHRRVHTGERPFGCGECDKSFKQRAHLIAHQSLHAKMAQPVG.

The region spanning 45-126 (RQRFRQFCYG…VALVEDLQKQ (82 aa)) is the SCAN box domain. Positions 128–188 (VKAWRQDVPS…ALLKEGRPGE (61 aa)) are disordered. A KRAB domain is found at 202-292 (VALGDIPFYF…ENRPRAALGP (91 aa)). C2H2-type zinc fingers lie at residues 317-339 (HSCG…QRTH), 345-367 (HKCP…QGVH), 373-395 (FSCS…QRIH), 401-423 (FGCS…RRVH), and 429-451 (FGCG…QSLH).

Belongs to the krueppel C2H2-type zinc-finger protein family. As to expression, widely expressed with highest levels in testis.

It is found in the nucleus. Functionally, may be involved in transcriptional regulation. This Homo sapiens (Human) protein is Zinc finger protein 213 (ZNF213).